The chain runs to 336 residues: Dual specificity mitogen-activated protein kinase kinase sek-1 (336 aa).

The Protein kinase domain maps to 50–311 (LVVLEELGKG…YPELLAMPFM (262 aa)). ATP contacts are provided by residues 56 to 64 (LGKGGYGIV) and lysine 79. Aspartate 176 serves as the catalytic Proton acceptor. Serine 204 carries the post-translational modification Phosphoserine. Residue threonine 208 is modified to Phosphothreonine.

The protein belongs to the protein kinase superfamily. STE Ser/Thr protein kinase family. MAP kinase kinase subfamily. Interacts with nsy-1. Interacts with unc-16. Requires Mg(2+) as cofactor. As to expression, expressed in linker cell in males.

It catalyses the reaction L-seryl-[protein] + ATP = O-phospho-L-seryl-[protein] + ADP + H(+). The catalysed reaction is L-threonyl-[protein] + ATP = O-phospho-L-threonyl-[protein] + ADP + H(+). The enzyme catalyses L-tyrosyl-[protein] + ATP = O-phospho-L-tyrosyl-[protein] + ADP + H(+). Activated by nsy-1-mediated phosphorylation. Dual specificity protein kinase which acts as an essential component of the p38 signal transduction pathway which is also composed of upstream effector nsy-1 and downstream effector pmk-1. May phosphorylate pmk-1. Downstream of CaMKII unc-43 and adapter protein tir-1, plays a role in determining asymmetric cell fates in olfactory AWC neurons during neuronal development. Activation results in the repression of odorant receptor str-2 expression in one of the 2 AWC neurons. Involved in resistance to pathogenic Gram-positive and Gram-negative bacterial and fungal infection. Involved in resistance to the nematotoxic C.cinerea galectin Cgl2. Probably by promoting pmk-1-mediated activation of skn-1, involved in the up-regulation of gcs-1 and glutathione-S-transferase gst-4 expression upon bacterial infection. Probably downstream of tir-1, required for the expression of antimicrobial peptide nlp-29 in the epidermis in response to fungal infection or physical injury. Regulates susceptibility of B.thuringiensis pore-forming toxin Cry5B and Cry21A. Involved in the response to oxidative stress. May regulate transcription factor daf-16 localization during oxidative stress. By phosphorylating pmk-1, regulates skn-1 localization during oxidative stress. By phosphorylating and activating pmk-1, plays a role in the stabilization of transcription factor rnt-1 in the intestine during oxidative stress. Up-regulates expression of gcs-1 in intestine upon arsenite treatment. Regulates germline proliferation in response to osmotic stress, starvation and germline apoptosis induced by heavy metals, such as Cu(2+). In association with mek-1, regulates germline cell apoptosis in response to oxidative, osmotic and heat shock stresses. Plays a role downstream of tir-1/nsy-1 in regulating susceptibility to anoxia. In males, by regulating pqn-41 expression, involved in non-apoptotic death of the linker cell which guides gonad elongation during larval development. Involved in egg laying. This is Dual specificity mitogen-activated protein kinase kinase sek-1 from Caenorhabditis elegans.